The following is a 411-amino-acid chain: Protein PHLOEM PROTEIN 2-LIKE A5 (411 aa).

One can recognise a TIR domain in the interval 20 to 157; sequence TGPQVFINFR…KWTEALFSVC (138 aa). Glu-94 is a catalytic residue.

The enzyme catalyses NAD(+) + H2O = ADP-D-ribose + nicotinamide + H(+). The sequence is that of Protein PHLOEM PROTEIN 2-LIKE A5 (PP2A5) from Arabidopsis thaliana (Mouse-ear cress).